An 85-amino-acid polypeptide reads, in one-letter code: ATP synthase subunit c (85 aa).

2 helical membrane passes run 20–40 (LGAG…GNIF) and 65–85 (FALT…ILFA).

Belongs to the ATPase C chain family. F-type ATPases have 2 components, F(1) - the catalytic core - and F(0) - the membrane proton channel. F(1) has five subunits: alpha(3), beta(3), gamma(1), delta(1), epsilon(1). F(0) has three main subunits: a(1), b(2) and c(10-14). The alpha and beta chains form an alternating ring which encloses part of the gamma chain. F(1) is attached to F(0) by a central stalk formed by the gamma and epsilon chains, while a peripheral stalk is formed by the delta and b chains.

The protein localises to the cell inner membrane. F(1)F(0) ATP synthase produces ATP from ADP in the presence of a proton or sodium gradient. F-type ATPases consist of two structural domains, F(1) containing the extramembraneous catalytic core and F(0) containing the membrane proton channel, linked together by a central stalk and a peripheral stalk. During catalysis, ATP synthesis in the catalytic domain of F(1) is coupled via a rotary mechanism of the central stalk subunits to proton translocation. Its function is as follows. Key component of the F(0) channel; it plays a direct role in translocation across the membrane. A homomeric c-ring of between 10-14 subunits forms the central stalk rotor element with the F(1) delta and epsilon subunits. The protein is ATP synthase subunit c of Gluconobacter oxydans (strain 621H) (Gluconobacter suboxydans).